Reading from the N-terminus, the 124-residue chain is Large ribosomal subunit protein uL18 (124 aa).

This sequence belongs to the universal ribosomal protein uL18 family. As to quaternary structure, part of the 50S ribosomal subunit; part of the 5S rRNA/L5/L18/L25 subcomplex. Contacts the 5S and 23S rRNAs.

Its function is as follows. This is one of the proteins that bind and probably mediate the attachment of the 5S RNA into the large ribosomal subunit, where it forms part of the central protuberance. This chain is Large ribosomal subunit protein uL18, found in Thermomicrobium roseum (strain ATCC 27502 / DSM 5159 / P-2).